We begin with the raw amino-acid sequence, 200 residues long: dITP/XTP pyrophosphatase (200 aa).

Residue threonine 19–lysine 24 participates in substrate binding. Mg(2+) is bound by residues glutamate 49 and aspartate 78. Aspartate 78 acts as the Proton acceptor in catalysis. Substrate is bound by residues serine 79, phenylalanine 158–aspartate 161, lysine 181, and histidine 186–arginine 187.

It belongs to the HAM1 NTPase family. As to quaternary structure, homodimer. It depends on Mg(2+) as a cofactor.

It catalyses the reaction XTP + H2O = XMP + diphosphate + H(+). It carries out the reaction dITP + H2O = dIMP + diphosphate + H(+). The enzyme catalyses ITP + H2O = IMP + diphosphate + H(+). Functionally, pyrophosphatase that catalyzes the hydrolysis of nucleoside triphosphates to their monophosphate derivatives, with a high preference for the non-canonical purine nucleotides XTP (xanthosine triphosphate), dITP (deoxyinosine triphosphate) and ITP. Seems to function as a house-cleaning enzyme that removes non-canonical purine nucleotides from the nucleotide pool, thus preventing their incorporation into DNA/RNA and avoiding chromosomal lesions. In Deinococcus radiodurans (strain ATCC 13939 / DSM 20539 / JCM 16871 / CCUG 27074 / LMG 4051 / NBRC 15346 / NCIMB 9279 / VKM B-1422 / R1), this protein is dITP/XTP pyrophosphatase.